The primary structure comprises 591 residues: Protein NRT1/ PTR FAMILY 4.3 (591 aa).

The segment covering 1–10 (MAEINKQSNK) has biased composition (polar residues). Residues 1 to 38 (MAEINKQSNKWEQEEVSNENNWELAEEESVDWRGRPSN) form a disordered region. Transmembrane regions (helical) follow at residues 47 to 67 (AALF…AVGN), 85 to 105 (ANIV…GGYL), 109 to 129 (FLGS…GFIL), 157 to 177 (GFKA…SGCV), 204 to 224 (FNAA…LLVW), 233 to 253 (IGFG…VSGT), 347 to 367 (LISL…LAQL), 395 to 415 (AIPY…LVPF), 429 to 449 (LTRI…AAML), 463 to 483 (ILSI…EMFT), 502 to 522 (FLMA…SVLV), and 551 to 571 (LFYW…LFWS).

It belongs to the major facilitator superfamily. Proton-dependent oligopeptide transporter (POT/PTR) (TC 2.A.17) family. In terms of tissue distribution, expressed in flowers. Detected in roots and siliques.

It is found in the membrane. In Arabidopsis thaliana (Mouse-ear cress), this protein is Protein NRT1/ PTR FAMILY 4.3 (NPF4.3).